The primary structure comprises 243 residues: Vesicle-associated membrane protein-associated protein B (243 aa).

The residue at position 2 (alanine 2) is an N-acetylalanine. The Cytoplasmic portion of the chain corresponds to 2 to 218 (AKVEQVLSLE…PAPATPGKEE (217 aa)). The MSP domain maps to 7–124 (VLSLEPQHEL…MDSKLRCVFE (118 aa)). Phosphoserine is present on serine 146. A Glycyl lysine isopeptide (Lys-Gly) (interchain with G-Cter in SUMO1) cross-link involves residue lysine 147. Threonine 150 carries the phosphothreonine modification. Phosphoserine is present on residues serine 158 and serine 159. Residues 161–196 (LDDTEVKKVMEECKRLQSEVQRLREENKQLKEEDGL) are a coiled coil. Residues 185–197 (EENKQLKEEDGLR) show a composition bias toward basic and acidic residues. Residues 185 to 217 (EENKQLKEEDGLRMRKPVLSNSPAPAPATPGKE) form a disordered region. At serine 206 the chain carries Phosphoserine. The helical; Anchor for type IV membrane protein transmembrane segment at 219–239 (GLSTRLLALVVLFFIVGVIIG) threads the bilayer.

Belongs to the VAMP-associated protein (VAP) (TC 9.B.17) family. Homodimer, and heterodimer with VAPA. Interacts with VAMP1 and VAMP2. Interacts (via MSP domain) with ZFYVE27. Interacts with RMDN3. Interacts with KIF5A in a ZFYVE27-dependent manner. Interacts (via MSP domain) with STARD3 (via phospho-FFAT motif). Interacts with STARD3NL (via FFAT motif). Interacts with CERT1. Interacts with PLEKHA3 and SACM1L to form a ternary complex. Interacts with VPS13A (via FFAT motif). Interacts with RB1CC1 (via phosphorylated FFAT motif), MIGA2 (via phosphorylated FFAT motif), RMDN3 (via phosphorylated FFAT motif), OSBPL1A (via FFAT motif), KCNB1 (via phosphorylated FFAT motif) and KCNB2 (via phosphorylated FFAT motif). Interacts (via MSP domain) with WDR44 (via FFAT motif); the interactions connect the endoplasmic reticulum (ER) with the endosomal tubule.

It is found in the endoplasmic reticulum membrane. Endoplasmic reticulum (ER)-anchored protein that mediates the formation of contact sites between the ER and endosomes via interaction with FFAT motif-containing proteins such as STARD3 or WDR44. Interacts with STARD3 in a FFAT motif phosphorylation dependent manner. Via interaction with WDR44 participates in neosynthesized protein export. Participates in the endoplasmic reticulum unfolded protein response (UPR) by inducing ERN1/IRE1 activity. Involved in cellular calcium homeostasis regulation. The protein is Vesicle-associated membrane protein-associated protein B of Sus scrofa (Pig).